A 123-amino-acid chain; its full sequence is Large ribosomal subunit protein bL12 (123 aa).

The protein belongs to the bacterial ribosomal protein bL12 family. Homodimer. Part of the ribosomal stalk of the 50S ribosomal subunit. Forms a multimeric L10(L12)X complex, where L10 forms an elongated spine to which 2 to 4 L12 dimers bind in a sequential fashion. Binds GTP-bound translation factors.

In terms of biological role, forms part of the ribosomal stalk which helps the ribosome interact with GTP-bound translation factors. Is thus essential for accurate translation. The sequence is that of Large ribosomal subunit protein bL12 from Zymomonas mobilis subsp. mobilis (strain ATCC 31821 / ZM4 / CP4).